The sequence spans 339 residues: Heat stress transcription factor C-1a (339 aa).

The stretch at 154-217 (EEEDAAEDVL…LAKLADDPNA (64 aa)) forms a coiled coil. The tract at residues 176–212 (LRHEQTAIGEELARMSQRLQATERRPDQLMSFLAKLA) is hydrophobic repeat HR-A/B. The tract at residues 227-248 (AERKRRRQHLPSHEPTVCPLPP) is disordered. Residues 229 to 233 (RKRRR) carry the Nuclear localization signal motif.

The protein belongs to the HSF family. Class C subfamily. As to quaternary structure, homotrimer. Post-translationally, exhibits temperature-dependent phosphorylation.

The protein resides in the nucleus. Its function is as follows. Transcriptional regulator that specifically binds DNA of heat shock promoter elements (HSE). In Oryza sativa subsp. japonica (Rice), this protein is Heat stress transcription factor C-1a (HSFC1A).